A 131-amino-acid chain; its full sequence is Holo-[acyl-carrier-protein] synthase (131 aa).

2 residues coordinate Mg(2+): aspartate 9 and glutamate 58.

The protein belongs to the P-Pant transferase superfamily. AcpS family. Mg(2+) serves as cofactor.

The protein resides in the cytoplasm. The catalysed reaction is apo-[ACP] + CoA = holo-[ACP] + adenosine 3',5'-bisphosphate + H(+). Its function is as follows. Transfers the 4'-phosphopantetheine moiety from coenzyme A to a Ser of acyl-carrier-protein. In Salmonella arizonae (strain ATCC BAA-731 / CDC346-86 / RSK2980), this protein is Holo-[acyl-carrier-protein] synthase.